The following is a 558-amino-acid chain: Putative ABC transporter ATP-binding protein gbs1680 (558 aa).

ABC transporter domains are found at residues 5–246 (IEWK…GIRE) and 295–527 (LSVQ…THLK). ATP-binding positions include 39-46 (GPSGSGKS) and 328-335 (GKNGAGKS).

Belongs to the ABC transporter superfamily.

It localises to the cell membrane. Functionally, probably part of an ABC transporter complex. Responsible for energy coupling to the transport system. The polypeptide is Putative ABC transporter ATP-binding protein gbs1680 (Streptococcus agalactiae serotype III (strain NEM316)).